The primary structure comprises 238 residues: Ribonuclease PH (238 aa).

Residues R86 and 124 to 126 contribute to the phosphate site; that span reads GTR.

The protein belongs to the RNase PH family. In terms of assembly, homohexameric ring arranged as a trimer of dimers.

It catalyses the reaction tRNA(n+1) + phosphate = tRNA(n) + a ribonucleoside 5'-diphosphate. Functionally, phosphorolytic 3'-5' exoribonuclease that plays an important role in tRNA 3'-end maturation. Removes nucleotide residues following the 3'-CCA terminus of tRNAs; can also add nucleotides to the ends of RNA molecules by using nucleoside diphosphates as substrates, but this may not be physiologically important. Probably plays a role in initiation of 16S rRNA degradation (leading to ribosome degradation) during starvation. This chain is Ribonuclease PH, found in Histophilus somni (strain 2336) (Haemophilus somnus).